The chain runs to 214 residues: Nascent polypeptide-associated complex subunit alpha (214 aa).

Disordered stretches follow at residues 1-57 (MSNP…NEKK) and 119-179 (ASAA…EDKD). A compositionally biased stretch (acidic residues) spans 22-38 (AEDEGSDSSDSEGEGEV). The 66-residue stretch at 52–117 (SRNEKKARKS…AKIEDLNSQA (66 aa)) folds into the NAC-A/B domain. The segment covering 119 to 128 (ASAAAQLAAQ) has biased composition (low complexity). Basic and acidic residues predominate over residues 129–159 (ESHDHAGHDHSGHDHSHDHGKGKAVDTGDEK). Positions 160–171 (KEEEEDDTEEVD) are enriched in acidic residues. One can recognise a UBA domain in the interval 175-214 (LEDKDIELVMTQASVSRNKAVKALKENDNDIVNSIMALSI).

Belongs to the NAC-alpha family. As to quaternary structure, part of the nascent polypeptide-associated complex (NAC), consisting of EGD2 and EGD1. NAC associates with ribosomes via EGD1.

The protein localises to the cytoplasm. It localises to the nucleus. Component of the nascent polypeptide-associated complex (NAC), a dynamic component of the ribosomal exit tunnel, protecting the emerging polypeptides from interaction with other cytoplasmic proteins to ensure appropriate nascent protein targeting. The NAC complex also promotes mitochondrial protein import by enhancing productive ribosome interactions with the outer mitochondrial membrane and blocks the inappropriate interaction of ribosomes translating non-secretory nascent polypeptides with translocation sites in the membrane of the endoplasmic reticulum. EGD2 may also be involved in transcription regulation. This is Nascent polypeptide-associated complex subunit alpha (egd2) from Sclerotinia sclerotiorum (strain ATCC 18683 / 1980 / Ss-1) (White mold).